A 960-amino-acid chain; its full sequence is Collagenase ColA (960 aa).

The first 30 residues, Met1 to Ala30, serve as a signal peptide directing secretion. The propeptide occupies Glu31 to Ser92. The interval Tyr93–Gly365 is activator domain. Residues Tyr93–Lys764 form an S1 metalloprotease domain region. The tract at residues Asp375–Lys644 is catalytic subdomain. Position 500 (His500) interacts with Zn(2+). Residue Glu501 is part of the active site. Zn(2+)-binding residues include His504 and Glu532. The helper subdomain stretch occupies residues Asn652 to Lys764. The 82-residue stretch at Thr768–Val849 folds into the PKD domain. Basic and acidic residues predominate over residues Ser836 to Thr845. Residues Ser836 to Tyr859 form a disordered region. Residues Lys846–Glu857 are compositionally biased toward polar residues. The interval Asp852–Lys960 is collagen-binding domain.

This sequence belongs to the peptidase M9B family. Collagenase subfamily. Requires Ca(2+) as cofactor. It depends on Zn(2+) as a cofactor.

The protein localises to the secreted. It carries out the reaction Digestion of native collagen in the triple helical region at Xaa-|-Gly bonds. With synthetic peptides, a preference is shown for Gly at P3 and P1', Pro and Ala at P2 and P2', and hydroxyproline, Ala or Arg at P3'.. Functionally, acts as a true collagenase, which is highly active and efficiently targets native tropocollagen. In vitro, can also cleave gelatin and the synthetic peptide FALGPA (furylacryloyl-Leu-Gly-Pro-Ala). May contribute to bacterial virulence in endophthalmitis or opportunistic infections via collagen degradation in the host extracellular matrix (ECM). This chain is Collagenase ColA, found in Bacillus cereus (strain ATCC 14579 / DSM 31 / CCUG 7414 / JCM 2152 / NBRC 15305 / NCIMB 9373 / NCTC 2599 / NRRL B-3711).